Consider the following 413-residue polypeptide: Arginine biosynthesis bifunctional protein ArgJ (413 aa).

Positions 158, 184, 195, 285, 408, and 413 each coordinate substrate. T195 functions as the Nucleophile in the catalytic mechanism.

This sequence belongs to the ArgJ family. Heterotetramer of two alpha and two beta chains.

The protein resides in the cytoplasm. The catalysed reaction is N(2)-acetyl-L-ornithine + L-glutamate = N-acetyl-L-glutamate + L-ornithine. It catalyses the reaction L-glutamate + acetyl-CoA = N-acetyl-L-glutamate + CoA + H(+). Its pathway is amino-acid biosynthesis; L-arginine biosynthesis; L-ornithine and N-acetyl-L-glutamate from L-glutamate and N(2)-acetyl-L-ornithine (cyclic): step 1/1. It participates in amino-acid biosynthesis; L-arginine biosynthesis; N(2)-acetyl-L-ornithine from L-glutamate: step 1/4. Its function is as follows. Catalyzes two activities which are involved in the cyclic version of arginine biosynthesis: the synthesis of N-acetylglutamate from glutamate and acetyl-CoA as the acetyl donor, and of ornithine by transacetylation between N(2)-acetylornithine and glutamate. In Mesorhizobium japonicum (strain LMG 29417 / CECT 9101 / MAFF 303099) (Mesorhizobium loti (strain MAFF 303099)), this protein is Arginine biosynthesis bifunctional protein ArgJ.